The primary structure comprises 38 residues: Large ribosomal subunit protein bL36 (38 aa).

It belongs to the bacterial ribosomal protein bL36 family.

The sequence is that of Large ribosomal subunit protein bL36 from Porphyromonas gingivalis (strain ATCC 33277 / DSM 20709 / CIP 103683 / JCM 12257 / NCTC 11834 / 2561).